Here is a 209-residue protein sequence, read N- to C-terminus: Probable glutathione peroxidase 8-A (209 aa).

A helical transmembrane segment spans residues 18–40 (VSVVFLSMLLCTGILCVLQLGFL). Cysteine 79 is a catalytic residue.

It belongs to the glutathione peroxidase family.

It is found in the membrane. The enzyme catalyses 2 glutathione + H2O2 = glutathione disulfide + 2 H2O. The protein is Probable glutathione peroxidase 8-A (gpx8-a) of Xenopus laevis (African clawed frog).